A 355-amino-acid polypeptide reads, in one-letter code: UDP-N-acetylglucosamine--N-acetylmuramyl-(pentapeptide) pyrophosphoryl-undecaprenol N-acetylglucosamine transferase (355 aa).

Residues 15-17, asparagine 127, arginine 163, serine 191, isoleucine 244, 263-268, and glutamine 288 each bind UDP-N-acetyl-alpha-D-glucosamine; these read TGG and ALTVSE.

This sequence belongs to the glycosyltransferase 28 family. MurG subfamily.

It localises to the cell inner membrane. It carries out the reaction di-trans,octa-cis-undecaprenyl diphospho-N-acetyl-alpha-D-muramoyl-L-alanyl-D-glutamyl-meso-2,6-diaminopimeloyl-D-alanyl-D-alanine + UDP-N-acetyl-alpha-D-glucosamine = di-trans,octa-cis-undecaprenyl diphospho-[N-acetyl-alpha-D-glucosaminyl-(1-&gt;4)]-N-acetyl-alpha-D-muramoyl-L-alanyl-D-glutamyl-meso-2,6-diaminopimeloyl-D-alanyl-D-alanine + UDP + H(+). It functions in the pathway cell wall biogenesis; peptidoglycan biosynthesis. In terms of biological role, cell wall formation. Catalyzes the transfer of a GlcNAc subunit on undecaprenyl-pyrophosphoryl-MurNAc-pentapeptide (lipid intermediate I) to form undecaprenyl-pyrophosphoryl-MurNAc-(pentapeptide)GlcNAc (lipid intermediate II). This Citrobacter koseri (strain ATCC BAA-895 / CDC 4225-83 / SGSC4696) protein is UDP-N-acetylglucosamine--N-acetylmuramyl-(pentapeptide) pyrophosphoryl-undecaprenol N-acetylglucosamine transferase.